Consider the following 177-residue polypeptide: MSRVAKAPVSIPASVEVKLDGQLLTVKGKNGELSRTIHNSVEVKQDNNQLTFSPRVGIANADAQSGTARALVNAMVIGVNEGFTKKLQLVGVGYRAQMKGNVLVLSLGFSHPIDHVLPAGVTAECPSQTEIVLKSADKQLIGQVAADIRAYRRPEPYKGKGVRYADEVVRMKEAKKK.

Belongs to the universal ribosomal protein uL6 family. Part of the 50S ribosomal subunit.

Its function is as follows. This protein binds to the 23S rRNA, and is important in its secondary structure. It is located near the subunit interface in the base of the L7/L12 stalk, and near the tRNA binding site of the peptidyltransferase center. This chain is Large ribosomal subunit protein uL6, found in Histophilus somni (strain 129Pt) (Haemophilus somnus).